The sequence spans 368 residues: Probable leucine aminopeptidase ARB_03492 (368 aa).

A signal peptide spans 1–18 (MKVSAIAAVAALAAVAVA). Asn92 carries an N-linked (GlcNAc...) asparagine glycan. His172 and Asp191 together coordinate Zn(2+). Asn192 and Asn216 each carry an N-linked (GlcNAc...) asparagine glycan. Residues Glu230 and Asp257 each coordinate Zn(2+). A disulfide bond links Cys301 and Cys305. Position 334 (His334) interacts with Zn(2+).

This sequence belongs to the peptidase M28 family. M28E subfamily. In terms of assembly, monomer. It depends on Zn(2+) as a cofactor.

Its subcellular location is the secreted. In terms of biological role, probable extracellular aminopeptidase which contributes to pathogenicity. The chain is Probable leucine aminopeptidase ARB_03492 from Arthroderma benhamiae (strain ATCC MYA-4681 / CBS 112371) (Trichophyton mentagrophytes).